The primary structure comprises 723 residues: Probable cadmium-transporting ATPase (723 aa).

The 64-residue stretch at 12–75 folds into the HMA domain; it reads EMKAYRVQGF…AGAFENLKVT (64 aa). Cd(2+)-binding residues include Cys23 and Cys26. The next 5 membrane-spanning stretches (helical) occupy residues 103–123, 127–147, 168–188, 329–349, and 361–381; these read STLL…YVNG, IVTT…LFKV, IGGA…LFAI, YYTP…PLFF, and LAVL…ISIV. Asp412 serves as the catalytic 4-aspartylphosphate intermediate. A run of 2 helical transmembrane segments spans residues 671 to 690 and 694 to 716; these read IIKA…LLLV and WLTL…LNGL.

Belongs to the cation transport ATPase (P-type) (TC 3.A.3) family. Type IB subfamily.

It is found in the cell membrane. It catalyses the reaction Cd(2+)(in) + ATP + H2O = Cd(2+)(out) + ADP + phosphate + H(+). Functionally, couples the hydrolysis of ATP with the export of cadmium. The protein is Probable cadmium-transporting ATPase (cadA) of Alkalihalophilus pseudofirmus (strain ATCC BAA-2126 / JCM 17055 / OF4) (Bacillus pseudofirmus).